The sequence spans 617 residues: Proline--tRNA ligase (617 aa).

This sequence belongs to the class-II aminoacyl-tRNA synthetase family. ProS type 1 subfamily. In terms of assembly, homodimer.

The protein resides in the cytoplasm. It catalyses the reaction tRNA(Pro) + L-proline + ATP = L-prolyl-tRNA(Pro) + AMP + diphosphate. Catalyzes the attachment of proline to tRNA(Pro) in a two-step reaction: proline is first activated by ATP to form Pro-AMP and then transferred to the acceptor end of tRNA(Pro). As ProRS can inadvertently accommodate and process non-cognate amino acids such as alanine and cysteine, to avoid such errors it has two additional distinct editing activities against alanine. One activity is designated as 'pretransfer' editing and involves the tRNA(Pro)-independent hydrolysis of activated Ala-AMP. The other activity is designated 'posttransfer' editing and involves deacylation of mischarged Ala-tRNA(Pro). The misacylated Cys-tRNA(Pro) is not edited by ProRS. The protein is Proline--tRNA ligase of Streptococcus agalactiae serotype V (strain ATCC BAA-611 / 2603 V/R).